The sequence spans 459 residues: Serine--tRNA ligase (459 aa).

254-256 lines the L-serine pocket; that stretch reads TAE. ATP contacts are provided by residues 285–287 and valine 301; that span reads RKE. Glutamate 308 contributes to the L-serine binding site. Residue 372–375 coordinates ATP; the sequence is EMVS. Threonine 408 is a binding site for L-serine.

This sequence belongs to the class-II aminoacyl-tRNA synthetase family. Type-1 seryl-tRNA synthetase subfamily. As to quaternary structure, homodimer. The tRNA molecule binds across the dimer.

The protein localises to the cytoplasm. The catalysed reaction is tRNA(Ser) + L-serine + ATP = L-seryl-tRNA(Ser) + AMP + diphosphate + H(+). The enzyme catalyses tRNA(Sec) + L-serine + ATP = L-seryl-tRNA(Sec) + AMP + diphosphate + H(+). Its pathway is aminoacyl-tRNA biosynthesis; selenocysteinyl-tRNA(Sec) biosynthesis; L-seryl-tRNA(Sec) from L-serine and tRNA(Sec): step 1/1. Its function is as follows. Catalyzes the attachment of serine to tRNA(Ser). Is also able to aminoacylate tRNA(Sec) with serine, to form the misacylated tRNA L-seryl-tRNA(Sec), which will be further converted into selenocysteinyl-tRNA(Sec). This is Serine--tRNA ligase from Staphylothermus marinus (strain ATCC 43588 / DSM 3639 / JCM 9404 / F1).